The following is a 473-amino-acid chain: Sucrose-6-phosphate hydrolase (473 aa).

Substrate is bound by residues Leu-44 to Asp-47, Gln-63, Tyr-106 to Ser-107, Arg-167 to Asp-168, and Glu-224. Residue Asp-47 is part of the active site.

Belongs to the glycosyl hydrolase 32 family.

The protein resides in the cytoplasm. The enzyme catalyses Hydrolysis of terminal non-reducing beta-D-fructofuranoside residues in beta-D-fructofuranosides.. It participates in glycan biosynthesis; sucrose metabolism. The protein is Sucrose-6-phosphate hydrolase (scrB) of Lactococcus lactis subsp. lactis (Streptococcus lactis).